The following is a 384-amino-acid chain: MGVTGAHGFPCCGKGSVEVAEMRDDLSQHQIQEEQELEADMLEQKPQLQVDLDLDPDPDPDPELEIGQVPALLESELYPALKLEAELDTEANSNEESDFEEPMQLVCKIESVHSNMGLPTPQTFRPWSLNSNCRSFTEENHVSACHHSISAQTSKHLFWANKLIQASEHSLQRAINMQLNNGSAGQPIRSPLREAIPTNALCSEEQLQIPDAHSAPPTTSSQAPSPLLSSDLPPPIDLTELITFASSLAMASSSRMDLPSLEHMMKAPPQEALEPSTEPLLTTVEEREPENHAETLPEKPREARAPLKSWSQEDKNFAQSYFDFSKPGIKRATIKGQIQLLQPPATSPLLQGSKEDSVPPGKEKENPLLVKIHFKLSAPTIPEK.

Residues 23 to 60 form a disordered region; that stretch reads RDDLSQHQIQEEQELEADMLEQKPQLQVDLDLDPDPDP. S167 and S170 each carry phosphoserine. Disordered stretches follow at residues 211–232, 284–310, and 340–366; these read DAHS…SSDL, VEER…LKSW, and LLQP…EKEN. The segment covering 214-231 has biased composition (low complexity); it reads SAPPTTSSQAPSPLLSSD. Basic and acidic residues predominate over residues 353 to 366; sequence SKEDSVPPGKEKEN.

As to quaternary structure, interacts with syntaxin-1 and ACTB. In terms of tissue distribution, detected in testis, and on the acrosomal cap of spermatids.

The chain is Spermatogenesis-associated protein 32 (SPATA32) from Homo sapiens (Human).